A 247-amino-acid polypeptide reads, in one-letter code: Killer cell lectin-like receptor subfamily I member 2 (247 aa).

Residues 1–12 (MPRKKQNERGTN) show a composition bias toward basic and acidic residues. A disordered region spans residues 1-39 (MPRKKQNERGTNKQEIINIETKSSTFQEKQRQSKTDQIS). At 1–79 (MPRKKQNERG…GTDPWLTTWR (79 aa)) the chain is on the cytoplasmic side. The chain crosses the membrane as a helical span at residues 80–100 (IITVILGTSCIILVTKVGFLI). The Extracellular portion of the chain corresponds to 101-247 (PNLFSRGEKR…KAYTCEFNLQ (147 aa)). N-linked (GlcNAc...) asparagine glycans are attached at residues asparagine 125, asparagine 196, asparagine 212, and asparagine 218. Positions 139–243 (FGNNFYLFFR…CSSKKAYTCE (105 aa)) constitute a C-type lectin domain. Intrachain disulfides connect cysteine 160-cysteine 242 and cysteine 221-cysteine 234.

As to quaternary structure, heterodimer with KLRE1. As to expression, expressed in natural killer (NK) cells.

It is found in the cell membrane. Functionally, lectin-like receptor for natural killer (NK) cells. Heterodimer formation with KLRE1 mediates NK cell cytolytic activity. In Rattus norvegicus (Rat), this protein is Killer cell lectin-like receptor subfamily I member 2.